Consider the following 190-residue polypeptide: MSTKIIKASAAEPDVFETSISQALVELETNSDLKAQLRELYITKAKEIELHNKKSIIIYVPMPKLKAFQKIQIRLVRELEKKFSGKHVVFIGDRKILPKPSHKTRVANKQKRPRSRTLTSVYDAILEDLVFPAEIVGKRIRIKLDGSQLIKVHLDKNQQTTIEHKVDTFQSVYKKLTGREVTFEFPEPYL.

Belongs to the eukaryotic ribosomal protein eS7 family. In terms of assembly, component of the small ribosomal subunit. Part of the small subunit (SSU) processome, composed of more than 70 proteins and the RNA chaperone small nucleolar RNA (snoRNA) U3.

It localises to the cytoplasm. The protein resides in the cytoskeleton. Its subcellular location is the microtubule organizing center. The protein localises to the centrosome. It is found in the nucleus. It localises to the nucleolus. Its function is as follows. Component of the small ribosomal subunit. The ribosome is a large ribonucleoprotein complex responsible for the synthesis of proteins in the cell. Required for rRNA maturation. Part of the small subunit (SSU) processome, first precursor of the small eukaryotic ribosomal subunit. During the assembly of the SSU processome in the nucleolus, many ribosome biogenesis factors, an RNA chaperone and ribosomal proteins associate with the nascent pre-rRNA and work in concert to generate RNA folding, modifications, rearrangements and cleavage as well as targeted degradation of pre-ribosomal RNA by the RNA exosome. This chain is Small ribosomal subunit protein eS7 (RpS7), found in Spodoptera frugiperda (Fall armyworm).